The sequence spans 913 residues: Eukaryotic translation initiation factor 3 subunit C (913 aa).

Positions 1 to 44 (MSRFFTTGSDSESESSLSGEELVTKPVGGNYGKQPLLLSEDEED) are disordered. The span at 8–21 (GSDSESESSLSGEE) shows a compositional bias: low complexity. Residues Ser9, Ser11, Ser13, Ser15, Ser16, Ser18, and Ser39 each carry the phosphoserine modification. Position 99 is an N6-acetyllysine (Lys99). 2 disordered regions span residues 157–301 (TSYK…GGEW) and 522–542 (QLTP…NEGE). Ser166, Ser178, Ser181, and Ser182 each carry phosphoserine. Over residues 166 to 190 (SADEDAEKNEEDSEGSSDEDEDEDG) the composition is skewed to acidic residues. Residues 199–216 (KKSEAPSGESRKFLKKMD) are compositionally biased toward basic and acidic residues. Residues 217 to 232 (DEDEDSEDSEDDEDWD) show a composition bias toward acidic residues. Residues 261–278 (PTTDEDKKAAEKKREDKA) are compositionally biased toward basic and acidic residues. Residues 522–531 (QLTPPEGSSK) are compositionally biased toward polar residues. Position 524 is a phosphothreonine (Thr524). An N6-acetyllysine modification is found at Lys643. A PCI domain is found at 673–849 (FHLHINLELL…QTVVMHRTEP (177 aa)). The disordered stretch occupies residues 885 to 913 (FRDQKDGYRKNEGYMRRGGYRQQQSQTAY). The span at 886-899 (RDQKDGYRKNEGYM) shows a compositional bias: basic and acidic residues. Ser909 bears the Phosphoserine mark.

Belongs to the eIF-3 subunit C family. In terms of assembly, component of the eukaryotic translation initiation factor 3 (eIF-3) complex, which is composed of 13 subunits: EIF3A, EIF3B, EIF3C, EIF3D, EIF3E, EIF3F, EIF3G, EIF3H, EIF3I, EIF3J, EIF3K, EIF3L and EIF3M. The eIF-3 complex appears to include 3 stable modules: module A is composed of EIF3A, EIF3B, EIF3G and EIF3I; module B is composed of EIF3F, EIF3H, and EIF3M; and module C is composed of EIF3C, EIF3D, EIF3E, EIF3K and EIF3L. EIF3C of module C binds EIF3B of module A and EIF3H of module B, thereby linking the three modules. EIF3J is a labile subunit that binds to the eIF-3 complex via EIF3B. The eIF-3 complex interacts with RPS6KB1 under conditions of nutrient depletion. Mitogenic stimulation leads to binding and activation of a complex composed of MTOR and RPTOR, leading to phosphorylation and release of RPS6KB1 and binding of EIF4B to eIF-3. Interacts with ALKBH4, IFIT1 and IFIT2. Interacts with BZW2/5MP1. Phosphorylated. Phosphorylation is enhanced upon serum stimulation.

It localises to the cytoplasm. In terms of biological role, component of the eukaryotic translation initiation factor 3 (eIF-3) complex, which is required for several steps in the initiation of protein synthesis. The eIF-3 complex associates with the 40S ribosome and facilitates the recruitment of eIF-1, eIF-1A, eIF-2:GTP:methionyl-tRNAi and eIF-5 to form the 43S pre-initiation complex (43S PIC). The eIF-3 complex stimulates mRNA recruitment to the 43S PIC and scanning of the mRNA for AUG recognition. The eIF-3 complex is also required for disassembly and recycling of post-termination ribosomal complexes and subsequently prevents premature joining of the 40S and 60S ribosomal subunits prior to initiation. The eIF-3 complex specifically targets and initiates translation of a subset of mRNAs involved in cell proliferation, including cell cycling, differentiation and apoptosis, and uses different modes of RNA stem-loop binding to exert either translational activation or repression. This Pongo abelii (Sumatran orangutan) protein is Eukaryotic translation initiation factor 3 subunit C.